The sequence spans 435 residues: Adenylosuccinate synthetase (435 aa).

Residues 11–17 (GDEGKGK) and 39–41 (GHT) each bind GTP. Asp-12 acts as the Proton acceptor in catalysis. Residues Asp-12 and Gly-39 each coordinate Mg(2+). Residues 12–15 (DEGK), 37–40 (NAGH), Thr-134, Arg-148, Asn-230, Thr-245, and Arg-309 each bind IMP. His-40 acts as the Proton donor in catalysis. 305-311 (VTTGRKR) lines the substrate pocket. GTP is bound by residues Arg-311, 337-339 (KLD), and 419-421 (GTG).

This sequence belongs to the adenylosuccinate synthetase family. As to quaternary structure, homodimer. Requires Mg(2+) as cofactor.

The protein resides in the cytoplasm. It catalyses the reaction IMP + L-aspartate + GTP = N(6)-(1,2-dicarboxyethyl)-AMP + GDP + phosphate + 2 H(+). The protein operates within purine metabolism; AMP biosynthesis via de novo pathway; AMP from IMP: step 1/2. Functionally, plays an important role in the de novo pathway and in the salvage pathway of purine nucleotide biosynthesis. Catalyzes the first committed step in the biosynthesis of AMP from IMP. This chain is Adenylosuccinate synthetase, found in Zygosaccharomyces rouxii (strain ATCC 2623 / CBS 732 / NBRC 1130 / NCYC 568 / NRRL Y-229).